Reading from the N-terminus, the 413-residue chain is S-adenosylmethionine synthase (413 aa).

ATP is bound at residue H15. D17 provides a ligand contact to Mg(2+). Residue E43 participates in K(+) binding. E56 and Q100 together coordinate L-methionine. The tract at residues 100–110 is flexible loop; that stretch reads QSPDISQGVNE. Residues 171–173, 248–249, D257, 263–264, A280, and K284 each bind ATP; these read DGK, KF, and RK. D257 is a binding site for L-methionine. Position 288 (K288) interacts with L-methionine.

It belongs to the AdoMet synthase family. In terms of assembly, homotetramer; dimer of dimers. Mg(2+) serves as cofactor. Requires K(+) as cofactor.

The protein resides in the cytoplasm. It catalyses the reaction L-methionine + ATP + H2O = S-adenosyl-L-methionine + phosphate + diphosphate. It functions in the pathway amino-acid biosynthesis; S-adenosyl-L-methionine biosynthesis; S-adenosyl-L-methionine from L-methionine: step 1/1. In terms of biological role, catalyzes the formation of S-adenosylmethionine (AdoMet) from methionine and ATP. The overall synthetic reaction is composed of two sequential steps, AdoMet formation and the subsequent tripolyphosphate hydrolysis which occurs prior to release of AdoMet from the enzyme. The protein is S-adenosylmethionine synthase of Prochlorococcus marinus (strain MIT 9215).